Reading from the N-terminus, the 100-residue chain is Urease subunit gamma (100 aa).

It belongs to the urease gamma subunit family. Heterotrimer of UreA (gamma), UreB (beta) and UreC (alpha) subunits. Three heterotrimers associate to form the active enzyme.

Its subcellular location is the cytoplasm. The enzyme catalyses urea + 2 H2O + H(+) = hydrogencarbonate + 2 NH4(+). Its pathway is nitrogen metabolism; urea degradation; CO(2) and NH(3) from urea (urease route): step 1/1. This chain is Urease subunit gamma, found in Methylobacillus flagellatus (strain ATCC 51484 / DSM 6875 / VKM B-1610 / KT).